Consider the following 1322-residue polypeptide: Phosphoribosylformylglycinamidine synthase (1322 aa).

ATP contacts are provided by residues 300-311 (GASTGAGGEIRD) and alanine 702. Mg(2+) contacts are provided by aspartate 703, glutamate 742, asparagine 746, and aspartate 915. Serine 917 contacts ATP. A Glutamine amidotransferase type-1 domain is found at 1073-1322 (VAILREQGIN…LFRNARAWVG (250 aa)). The active-site Nucleophile is cysteine 1166. Active-site residues include histidine 1287 and glutamate 1289.

This sequence in the N-terminal section; belongs to the FGAMS family. Monomer.

Its subcellular location is the cytoplasm. It catalyses the reaction N(2)-formyl-N(1)-(5-phospho-beta-D-ribosyl)glycinamide + L-glutamine + ATP + H2O = 2-formamido-N(1)-(5-O-phospho-beta-D-ribosyl)acetamidine + L-glutamate + ADP + phosphate + H(+). It participates in purine metabolism; IMP biosynthesis via de novo pathway; 5-amino-1-(5-phospho-D-ribosyl)imidazole from N(2)-formyl-N(1)-(5-phospho-D-ribosyl)glycinamide: step 1/2. In terms of biological role, phosphoribosylformylglycinamidine synthase involved in the purines biosynthetic pathway. Catalyzes the ATP-dependent conversion of formylglycinamide ribonucleotide (FGAR) and glutamine to yield formylglycinamidine ribonucleotide (FGAM) and glutamate. The protein is Phosphoribosylformylglycinamidine synthase of Xylella fastidiosa (strain Temecula1 / ATCC 700964).